A 729-amino-acid chain; its full sequence is ATP-dependent DNA helicase Hel308 (729 aa).

ATP is bound by residues Gln28 and 46 to 53 (IPTASGKT). The Helicase ATP-binding domain occupies 33–199 (EKGLLEGRNL…WLEAELVVSE (167 aa)). The short motif at 144-147 (DEVH) is the DEAH box element. In terms of domain architecture, Helicase C-terminal spans 232–426 (AVNLALDTLK…SKLGTENALR (195 aa)). The segment at 706–729 (SSGIIASEPPEKSPYSGQKTISDY) is disordered. Polar residues predominate over residues 720 to 729 (YSGQKTISDY).

Belongs to the helicase family. Hel308 subfamily. Monomer.

The catalysed reaction is Couples ATP hydrolysis with the unwinding of duplex DNA by translocating in the 3'-5' direction.. It catalyses the reaction ATP + H2O = ADP + phosphate + H(+). DNA-dependent ATPase and 3'-5' DNA helicase that may be involved in repair of stalled replication forks. The polypeptide is ATP-dependent DNA helicase Hel308 (Methanosarcina barkeri (strain Fusaro / DSM 804)).